The sequence spans 254 residues: D-aminoacyl-tRNA deacylase (254 aa).

The disordered stretch occupies residues 61-82 (KPTLTVHTPGNLTDDNSHGGNP). A compositionally biased stretch (polar residues) spans 65-74 (TVHTPGNLTD).

It belongs to the DtdA deacylase family. Monomer. Requires Zn(2+) as cofactor.

The enzyme catalyses a D-aminoacyl-tRNA + H2O = a tRNA + a D-alpha-amino acid + H(+). It catalyses the reaction glycyl-tRNA(Ala) + H2O = tRNA(Ala) + glycine + H(+). Its function is as follows. D-aminoacyl-tRNA deacylase with broad substrate specificity. By recycling D-aminoacyl-tRNA to D-amino acids and free tRNA molecules, this enzyme counteracts the toxicity associated with the formation of D-aminoacyl-tRNA entities in vivo. The sequence is that of D-aminoacyl-tRNA deacylase from Methanococcus maripaludis (strain DSM 14266 / JCM 13030 / NBRC 101832 / S2 / LL).